The chain runs to 357 residues: Protein RecA (357 aa).

67–74 (GPESSGKT) provides a ligand contact to ATP. The tract at residues 335–357 (LSSSASDDENSEGNVDFETGEVF) is disordered.

It belongs to the RecA family.

The protein resides in the cytoplasm. In terms of biological role, can catalyze the hydrolysis of ATP in the presence of single-stranded DNA, the ATP-dependent uptake of single-stranded DNA by duplex DNA, and the ATP-dependent hybridization of homologous single-stranded DNAs. It interacts with LexA causing its activation and leading to its autocatalytic cleavage. This Shewanella sp. (strain MR-4) protein is Protein RecA.